Here is a 571-residue protein sequence, read N- to C-terminus: RNA polymerase sigma factor SigA (571 aa).

A sigma-70 factor domain-2 region spans residues M321–T391. The short motif at D345–Q348 is the Interaction with polymerase core subunit RpoC element. Residues E400–A476 form a sigma-70 factor domain-3 region. Residues V489–H542 are sigma-70 factor domain-4. A DNA-binding region (H-T-H motif) is located at residues L515–A534.

The protein belongs to the sigma-70 factor family. RpoD/SigA subfamily. In terms of assembly, interacts transiently with the RNA polymerase catalytic core.

Its subcellular location is the cytoplasm. In terms of biological role, sigma factors are initiation factors that promote the attachment of RNA polymerase to specific initiation sites and are then released. This sigma factor is the primary sigma factor during exponential growth. This is RNA polymerase sigma factor SigA from Chlamydia muridarum (strain MoPn / Nigg).